Reading from the N-terminus, the 312-residue chain is DDRGK domain-containing protein 1 (312 aa).

The Lumenal segment spans residues 1–2 (ME). The chain crosses the membrane as a helical span at residues 3 to 23 (LIILVGIAIALLVVIITLYLL). Topologically, residues 24–312 (QKKNAAPETK…ISAGGEEASS (289 aa)) are cytoplasmic. The disordered stretch occupies residues 30–163 (PETKPAAAPQ…KQQEDLEAEV (134 aa)). Residues 52–85 (RRAQIARNQRNRLRQNAPAAPAGQVAPAAGAPAA) show a composition bias toward low complexity. The span at 90–99 (DHEDEGQVDA) shows a compositional bias: acidic residues. Residues 110–163 (LDEKMGAKKRAKMEAKEQKRLQREQELHDREQRKVKEAKEEAERKQQEDLEAEV) are compositionally biased toward basic and acidic residues.

This sequence belongs to the DDRGK1 family. In terms of assembly, interacts with Atg9; the interaction is transient.

It is found in the endoplasmic reticulum membrane. Substrate adapter for ufmylation, the covalent attachment of the ubiquitin-like modifier UFM1 to substrate proteins. Required for ufmylation of Atg9; protects the nervous system during aging, possibly by stabilizing Atg9 and supporting its function. The protein is DDRGK domain-containing protein 1 of Drosophila erecta (Fruit fly).